We begin with the raw amino-acid sequence, 426 residues long: MTEELFSNSETCSLSDPLTSKTLSSIENPFDDPYILSEESEILTIKTDVLRPNILNRKSSFYPEADAPVRKSNLQVKKIFENQVLNCDGIKVAITIPDTSLIAGSLLHGNIWLSYEGAKNVETGVWIKEMFLDFYGILNFKGHSEPFYSISEKYSFCNLKTSALILSKAASASIGNKGLFLKCSCKVGFPFSFIVPLDIGPGTYHSSKLELLYYISSTLTLTSLDQNIRCTRCTIPKRVITSMHNNIAELYNPISCIKSLPYLSLEEAKTTLEVHTDRSLFFSGQIIDFTICYTHNHHRRIHNIKARLLETHIFHPNTQNHYGGYCMNQAEETFASCGYLKRYQKTKTKTRAKSTWKIANKSVYSNLAPTLKNTIHAQIKIPEFCRSVNLKDQLKIDYTLEVCFSAFFKPRILSIQIPITILHSWN.

Belongs to the arrestin family.

It localises to the cytoplasm. Its subcellular location is the nucleus. Functionally, has a role in meiosis. The sequence is that of Meiotically up-regulated gene 170 protein (mug170) from Schizosaccharomyces pombe (strain 972 / ATCC 24843) (Fission yeast).